Consider the following 877-residue polypeptide: Dynamin (877 aa).

The Dynamin-type G domain occupies 23–289; it reads QLDLPQIAVV…LTNHIRDTLP (267 aa). Residues 33–40 form a G1 motif region; that stretch reads GGQSAGKS. 33–41 is a binding site for GTP; the sequence is GGQSAGKSS. The tract at residues 59–61 is G2 motif; that stretch reads VTR. Residues 131-134 are G3 motif; it reads DLPG. The segment at 200-203 is G4 motif; sequence TKLD. GTP-binding positions include 200–206 and 231–234; these read TKLDLMD and NRSQ. The interval 230–233 is G5 motif; sequence VNRS. One can recognise a PH domain in the interval 513-621; it reads QVIRKGHMVI…WKASFLRAGV (109 aa). 2 disordered regions span residues 623–648 and 740–834; these read PEKQ…QLER and TVSS…SGAV. The span at 630-641 shows a compositional bias: acidic residues; it reads ENGDESASEESS. The 92-residue stretch at 650-741 folds into the GED domain; the sequence is VETIRNLVDS…IIGDVSMATV (92 aa). S756, S764, and S767 each carry phosphoserine. Residues 788–826 show a composition bias toward pro residues; it reads PPLPPSTGRPAPAIPNRPGGGAPPLPGGRPGGSLPPPML.

It belongs to the TRAFAC class dynamin-like GTPase superfamily. Dynamin/Fzo/YdjA family.

Its subcellular location is the cytoplasm. The protein resides in the cytoskeleton. It catalyses the reaction GTP + H2O = GDP + phosphate + H(+). Functionally, microtubule-associated force-producing protein which is involved in the production of microtubule bundles and which is able to bind and hydrolyze GTP. Implicated in endocytic protein sorting. The polypeptide is Dynamin (shi) (Drosophila melanogaster (Fruit fly)).